A 368-amino-acid chain; its full sequence is Glycolate oxidase 3 (368 aa).

An N-acetylmethionine modification is found at Met1. Residues 1-359 enclose the FMN hydroxy acid dehydrogenase domain; it reads MEITNVMEYE…SRTHIKTDWD (359 aa). Tyr24 contributes to the glyoxylate binding site. Residues 77–79, Ser106, 127–129, and Thr155 each bind FMN; these read PTA and QLY. Tyr129 provides a ligand contact to glyoxylate. Arg164 contributes to the glyoxylate binding site. Residues Lys230 and Ser252 each contribute to the FMN site. 2 residues coordinate glyoxylate: His254 and Arg257. The Proton acceptor role is filled by His254. FMN is bound by residues 285–289 and 308–309; these read DGGVR and GR.

The protein belongs to the FMN-dependent alpha-hydroxy acid dehydrogenase family. As to quaternary structure, homotetramer. FMN serves as cofactor.

It is found in the peroxisome. It catalyses the reaction glycolate + O2 = glyoxylate + H2O2. It functions in the pathway photosynthesis; photorespiration; glycine from 2-phosphoglycolate: step 2/3. Its function is as follows. Catalyzes the oxidation of glycolate to glyoxylate, with a reduction of O2 to H2O2. Is a key enzyme in photorespiration in green plants. This chain is Glycolate oxidase 3 (GLO5), found in Arabidopsis thaliana (Mouse-ear cress).